A 439-amino-acid polypeptide reads, in one-letter code: 5-hydroxybenzimidazole synthase (439 aa).

Residues Met-96, Tyr-125, His-164, 187-189 (SKG), 228-231 (NGIR), and Glu-267 each bind substrate. His-271 provides a ligand contact to Zn(2+). Residue Tyr-294 coordinates substrate. Residue His-335 participates in Zn(2+) binding. Residues Cys-410, Cys-413, and Cys-417 each coordinate [4Fe-4S] cluster.

The protein belongs to the ThiC family. 5-hydroxybenzimidazole synthase subfamily. Homodimer. [4Fe-4S] cluster serves as cofactor.

It carries out the reaction 5-amino-1-(5-phospho-beta-D-ribosyl)imidazole + AH2 + S-adenosyl-L-methionine = 5-hydroxybenzimidazole + 5'-deoxyadenosine + formate + L-methionine + A + NH4(+) + phosphate + 2 H(+). Functionally, catalyzes the conversion of aminoimidazole ribotide (AIR) to 5-hydroxybenzimidazole (5-HBI) in a radical S-adenosyl-L-methionine (SAM)-dependent reaction. Is thus involved in the anaerobic biosynthesis of the benzimidazole lower axial ligand of the cobamide produced by D.autotrophicum. The polypeptide is 5-hydroxybenzimidazole synthase (Desulforapulum autotrophicum (strain ATCC 43914 / DSM 3382 / VKM B-1955 / HRM2) (Desulfobacterium autotrophicum)).